The primary structure comprises 385 residues: Guanine nucleotide-binding protein alpha-5 subunit (385 aa).

A lipid anchor (N-myristoyl glycine) is attached at G2. C6 carries the S-palmitoyl cysteine lipid modification. One can recognise a G-alpha domain in the interval 32–385 (RKIKMLLLGI…NKNIETLSLE (354 aa)). A G1 motif region spans residues 35–48 (KMLLLGISDSGKST). Residues 40–47 (GISDSGKS), 174–180 (IHMRQTT), 199–203 (DVGGQ), 298–301 (NKID), and A357 each bind GTP. Residues S47 and T180 each contribute to the Mg(2+) site. Residues 172-180 (DLIHMRQTT) form a G2 motif region. Residues 195-204 (IRLIDVGGQK) form a G3 motif region. The segment at 294–301 (MLFLNKID) is G4 motif. Positions 355 to 360 (TQATIT) are G5 motif.

The protein belongs to the G-alpha family. In terms of assembly, g proteins are composed of 3 units; alpha, beta and gamma. The alpha chain contains the guanine nucleotide binding site.

Its function is as follows. Guanine nucleotide-binding proteins (G proteins) are involved as modulators or transducers in various transmembrane signaling systems. This is Guanine nucleotide-binding protein alpha-5 subunit (gpa-5) from Caenorhabditis briggsae.